A 404-amino-acid polypeptide reads, in one-letter code: RNA exonuclease 3 (404 aa).

The span at 1 to 17 shows a compositional bias: polar residues; it reads MNNNAQNKRSLDDSNGN. Positions 1-29 are disordered; it reads MNNNAQNKRSLDDSNGNDTKRPKQEDPKY. Positions 18–28 are enriched in basic and acidic residues; it reads DTKRPKQEDPK. The 149-residue stretch at 241-389 folds into the Exonuclease domain; that stretch reads VLGIDCEMGF…EDSIAAIDIV (149 aa).

This sequence belongs to the REXO1/REXO3 family.

Its subcellular location is the cytoplasm. The protein localises to the nucleus. 3' to 5' exoribonuclease required for proper 3' end maturation of MRP RNA and of the U5L snRNA. The polypeptide is RNA exonuclease 3 (REX3) (Candida albicans (strain SC5314 / ATCC MYA-2876) (Yeast)).